We begin with the raw amino-acid sequence, 878 residues long: Probable di- and tripeptidase DUG2 (878 aa).

5 WD repeats span residues 18–57 (NHAFSILSIVAFPKKRLLFAGSQDSKILVFDLPTYNLIHT), 68–107 (HTRSSVLCLTGSEDENFLFSGGADSLVRIWSIGEKTIRDD), 235–274 (RFNQLLEKSSRTSGAEHIISSAGDGISKLWEFSKDKGQNT), 282–322 (DKID…IIST), and 362–405 (PQQG…SAVP). Residue His520 participates in Zn(2+) binding. Asp522 is a catalytic residue. A Zn(2+)-binding site is contributed by Asp553. The active-site Proton acceptor is the Glu586. Zn(2+) is bound at residue Glu587. The WD 6 repeat unit spans residues 608 to 651 (IDWILLSNSTWVDQEHPCLNYGLRGVINAQIKVWSDKPDGHSGL). His853 lines the Zn(2+) pocket.

The protein belongs to the peptidase M20A family. As to quaternary structure, component of the GSH degradosomal complex composed of at least DUG1, DUG2 and DUG3. Zn(2+) serves as cofactor.

It localises to the cytoplasm. Its subcellular location is the nucleus. In terms of biological role, component of the GSH degradosomal complex involved in the degradation of glutathione (GSH) and other peptides containing a gamma-glu-X bond. The protein is Probable di- and tripeptidase DUG2 (DUG2) of Saccharomyces cerevisiae (strain ATCC 204508 / S288c) (Baker's yeast).